The primary structure comprises 37 residues: M-oxotoxin-Ot2b (37 aa).

In terms of tissue distribution, expressed by the venom gland.

It localises to the secreted. Disrupts biological membranes, particularly those rich in phosphocholine. Has antimicrobial activity against Gram-negative bacterium E.coli, Gram-positive bacteria B.subtilis and S.aureus, and hemolytic activity against sheep, pig and guinea pig red blood cells. Has insecticidal activity against S.frugiperda ovarian cells by opening non-selective ion channels. Enhances the insecticidal activity of spider venom neurotoxic peptides. This is M-oxotoxin-Ot2b from Oxyopes takobius (Lynx spider).